The primary structure comprises 147 residues: MLMPKRVKWRKQQRGRMKGKATRGNFVAYGDFGIMALEPGWITSNQIEAARVAIARHIKRGGKVWIKIFPDKPVTRKPAETRMGSGKGSPEYWVAVVKPGRVMFEVGGVDEEVAKEALRLAIHKLPIKCKIVSREEAKVGGEANEGV.

It belongs to the universal ribosomal protein uL16 family. As to quaternary structure, part of the 50S ribosomal subunit.

Its function is as follows. Binds 23S rRNA and is also seen to make contacts with the A and possibly P site tRNAs. The protein is Large ribosomal subunit protein uL16 of Caldicellulosiruptor bescii (strain ATCC BAA-1888 / DSM 6725 / KCTC 15123 / Z-1320) (Anaerocellum thermophilum).